A 92-amino-acid chain; its full sequence is Phospholemman (92 aa).

A signal peptide spans 1–20 (MAYLHHTLLVCMGLLAMANA). The Extracellular segment spans residues 22–35 (APQEQDPFTYDYQS). Residues 36 to 56 (LRIGGLIIAGILFILGILIIL) form a helical membrane-spanning segment. Topologically, residues 57–92 (KRGAWERFDTARRTGEPDEEEGTFRSSIRRLSTRRR) are cytoplasmic. Residues 67–92 (ARRTGEPDEEEGTFRSSIRRLSTRRR) form a disordered region. The residue at position 79 (Thr79) is a Phosphothreonine. Residue Ser82 is modified to Phosphoserine. Ser83 is modified (phosphoserine; by PKA and PKC). Basic residues predominate over residues 83 to 92 (SIRRLSTRRR). Residue Ser88 is modified to Phosphoserine; by PKA. Thr89 carries the post-translational modification Phosphothreonine; by PKC.

The protein belongs to the FXYD family. As to quaternary structure, homotetramer. Monomer. Regulatory subunit of the sodium/potassium-transporting ATPase (NKA) which is composed of a catalytic alpha subunit, a non-catalytic beta subunit and an additional regulatory subunit. The monomeric form associates with NKA while the oligomeric form does not. Interacts with the catalytic alpha-1 subunit ATP1A1. Also interacts with the catalytic alpha-2 and alpha-3 subunits ATP1A2 and ATP1A3. Very little interaction with ATP1A1, ATP1A2 or ATP1A3 when phosphorylated at Ser-83. Interacts with the non-catalytic beta-1 subunit ATP1B1. Oxidative stress decreases interaction with ATP1A1 but increases interaction with ATP1B1. Post-translationally, major plasma membrane substrate for cAMP-dependent protein kinase (PKA) and protein kinase C (PKC) in several different tissues. Phosphorylated in response to insulin and adrenergic stimulation. Phosphorylation at Ser-88 stimulates sodium/potassium-transporting ATPase activity while the unphosphorylated form inhibits sodium/potassium-transporting ATPase activity. Phosphorylation increases tetramerization, decreases binding to ATP1A1 and reduces inhibition of ATP1A1 activity. Phosphorylation at Ser-83 leads to greatly reduced interaction with ATP1A1, ATP1A2 and ATP1A3. May be phosphorylated by DMPK. In terms of processing, palmitoylation increases half-life and stability and is enhanced upon phosphorylation at Ser-88 by PKA. Glutathionylated. Expressed in ventricular myocytes (at protein level).

It is found in the cell membrane. It localises to the sarcolemma. The protein localises to the apical cell membrane. The protein resides in the membrane. Its subcellular location is the caveola. It is found in the T-tubule. Associates with and regulates the activity of the sodium/potassium-transporting ATPase (NKA) which transports Na(+) out of the cell and K(+) into the cell. Inhibits NKA activity in its unphosphorylated state and stimulates activity when phosphorylated. Reduces glutathionylation of the NKA beta-1 subunit ATP1B1, thus reversing glutathionylation-mediated inhibition of ATP1B1. Contributes to female sexual development by maintaining the excitability of neurons which secrete gonadotropin-releasing hormone. In Oryctolagus cuniculus (Rabbit), this protein is Phospholemman.